The sequence spans 344 residues: Methionine import ATP-binding protein MetN 1 (344 aa).

An ABC transporter domain is found at 2 to 241; sequence IELRNLSQRF…PHHEVTRALI (240 aa). 38–45 contacts ATP; that stretch reads GRSGAGKS.

The protein belongs to the ABC transporter superfamily. Methionine importer (TC 3.A.1.24) family. As to quaternary structure, the complex is composed of two ATP-binding proteins (MetN), two transmembrane proteins (MetI) and a solute-binding protein (MetQ).

Its subcellular location is the cell inner membrane. It carries out the reaction L-methionine(out) + ATP + H2O = L-methionine(in) + ADP + phosphate + H(+). The enzyme catalyses D-methionine(out) + ATP + H2O = D-methionine(in) + ADP + phosphate + H(+). In terms of biological role, part of the ABC transporter complex MetNIQ involved in methionine import. Responsible for energy coupling to the transport system. The protein is Methionine import ATP-binding protein MetN 1 of Burkholderia ambifaria (strain ATCC BAA-244 / DSM 16087 / CCUG 44356 / LMG 19182 / AMMD) (Burkholderia cepacia (strain AMMD)).